A 264-amino-acid polypeptide reads, in one-letter code: Catenin delta-2 (264 aa).

4 ARM repeats span residues 20 to 59 (NKIK…NLVY), 64 to 104 (DDNK…NLSS), 120 to 162 (LTNA…NVSS), and 166 to 211 (EARR…NLSY). The disordered stretch occupies residues 238-264 (GKDAESSGCWGKKKKKKKSQDQWDGVG).

This sequence belongs to the beta-catenin family. As to quaternary structure, binds to E-cadherin at a juxtamembrane site within the cytoplasmic domain. Binds to PSEN1. Interacts with ZBTB33. Interacts with ARHGEF28. Interacts (via the extreme C-terminus) with FRMPD2 (via the PDZ 2 domain). Interacts with PDZD2. Interacts with CDK5. Interacts with CTNBB1. Interacts with GSK3A and GSK3B. Interacts with DNM2. Interacts with CCDC85B. In terms of processing, O-glycosylated. Phosphorylated by CDK5. Phosphorylated by GSK3B. Predominantly expressed in brain; accumulates in cortical neurons (at protein level).

It is found in the nucleus. The protein resides in the cell junction. The protein localises to the adherens junction. It localises to the cell projection. Its subcellular location is the dendrite. It is found in the perikaryon. In terms of biological role, has a critical role in neuronal development, particularly in the formation and/or maintenance of dendritic spines and synapses. Involved in the regulation of canonical Wnt signaling. It probably acts on beta-catenin turnover, facilitating beta-catenin interaction with GSK3B, phosphorylation, ubiquitination and degradation. May be involved in neuronal cell adhesion and tissue morphogenesis and integrity by regulating adhesion molecules. Functions as a transcriptional activator when bound to ZBTB33. The chain is Catenin delta-2 (Ctnnd2) from Rattus norvegicus (Rat).